The following is a 251-amino-acid chain: B3 domain-containing protein At2g24670 (251 aa).

Positions 48-111 are disordered; that stretch reads TTPSTVMESK…SSKTREPTPG (64 aa). Positions 56–70 are enriched in basic and acidic residues; that stretch reads SKSHIHDHSLRESPT. The segment at residues 153 to 249 is a DNA-binding region (TF-B3); the sequence is VSQIVELEFL…TLYFALVPLY (97 aa).

Its subcellular location is the nucleus. This Arabidopsis thaliana (Mouse-ear cress) protein is B3 domain-containing protein At2g24670.